A 240-amino-acid chain; its full sequence is tRNA (guanine-N(7)-)-methyltransferase (240 aa).

Residues glutamate 71, glutamate 96, aspartate 123, and aspartate 146 each coordinate S-adenosyl-L-methionine. Aspartate 146 is a catalytic residue. Substrate-binding positions include lysine 150, aspartate 182, and 219–222; that span reads TKFE.

It belongs to the class I-like SAM-binding methyltransferase superfamily. TrmB family.

The catalysed reaction is guanosine(46) in tRNA + S-adenosyl-L-methionine = N(7)-methylguanosine(46) in tRNA + S-adenosyl-L-homocysteine. It functions in the pathway tRNA modification; N(7)-methylguanine-tRNA biosynthesis. Functionally, catalyzes the formation of N(7)-methylguanine at position 46 (m7G46) in tRNA. This is tRNA (guanine-N(7)-)-methyltransferase from Hydrogenovibrio crunogenus (strain DSM 25203 / XCL-2) (Thiomicrospira crunogena).